We begin with the raw amino-acid sequence, 906 residues long: Catenin alpha-2 (906 aa).

Residues 866–880 (KKPLVKREKPEEYQT) show a composition bias toward basic and acidic residues. The interval 866 to 892 (KKPLVKREKPEEYQTRVRRGSQKKHIS) is disordered. The span at 881–891 (RVRRGSQKKHI) shows a compositional bias: basic residues.

This sequence belongs to the vinculin/alpha-catenin family. Interacts with CDH1 and CDH2. As to expression, mainly in the nervous system (at protein level).

The protein localises to the cell membrane. It is found in the cytoplasm. Its subcellular location is the cytoskeleton. It localises to the cell junction. The protein resides in the adherens junction. The protein localises to the cell projection. It is found in the axon. Its subcellular location is the nucleus. Functionally, may function as a linker between cadherin adhesion receptors and the cytoskeleton to regulate cell-cell adhesion and differentiation in the nervous system. This chain is Catenin alpha-2 (CTNNA2), found in Gallus gallus (Chicken).